Consider the following 1080-residue polypeptide: Headcase protein (1080 aa).

Disordered regions lie at residues 1-27 (MAPR…LQQQ), 181-277 (IYLN…GNNG), 310-335 (SLSS…ISVS), 655-693 (PLES…QPPK), 798-826 (SKYQ…QHAT), 891-916 (SGCS…DGSK), and 940-974 (QRQQ…NGWS). The segment covering 181-197 (IYLNGSGNRPTLANGSL) has biased composition (polar residues). Gly residues predominate over residues 218-228 (NGGGGGGGAGV). Over residues 232-251 (TKTPLSNNNGNSYAGLTPNP) the composition is skewed to polar residues. Positions 263-277 (NNGNTASNGSSGNNG) are enriched in low complexity. Residues 663 to 688 (GATTTQVPNAQGSPTASGCSSNTIAS) show a composition bias toward polar residues. Low complexity predominate over residues 801–826 (QQQQHQQQQQQRQQQHNLQPQQQHAT). Positions 900–913 (QPSLSPTASSNGND) are enriched in polar residues. Residues 941–974 (RQQPPQQQVPQQQPHAASPTASLTSSSSSSNGWS) are compositionally biased toward low complexity.

As to expression, expressed in all imaginal cells of the embryo and larvae. Expressed in a subset of tracheal fusion cells from stage 14 to the end of embryogenesis in metameres 2-9, lateral trunk and ventral anastomoses.

It localises to the cytoplasm. Required for imaginal cell differentiation, may be involved in hormonal responsiveness during metamorphosis. Involved in an inhibitory signaling mechanism to determine the number of cells that will form unicellular sprouts in the trachea. Regulated by transcription factor esg. The longer hdc protein is completely functional and the shorter protein carries some function. This is Headcase protein from Drosophila melanogaster (Fruit fly).